A 159-amino-acid chain; its full sequence is Crossover junction endodeoxyribonuclease RuvC (159 aa).

Catalysis depends on residues Asp-7, Glu-67, and Asp-139. The Mg(2+) site is built by Asp-7, Glu-67, and Asp-139.

Belongs to the RuvC family. In terms of assembly, homodimer which binds Holliday junction (HJ) DNA. The HJ becomes 2-fold symmetrical on binding to RuvC with unstacked arms; it has a different conformation from HJ DNA in complex with RuvA. In the full resolvosome a probable DNA-RuvA(4)-RuvB(12)-RuvC(2) complex forms which resolves the HJ. Mg(2+) serves as cofactor.

Its subcellular location is the cytoplasm. It carries out the reaction Endonucleolytic cleavage at a junction such as a reciprocal single-stranded crossover between two homologous DNA duplexes (Holliday junction).. Functionally, the RuvA-RuvB-RuvC complex processes Holliday junction (HJ) DNA during genetic recombination and DNA repair. Endonuclease that resolves HJ intermediates. Cleaves cruciform DNA by making single-stranded nicks across the HJ at symmetrical positions within the homologous arms, yielding a 5'-phosphate and a 3'-hydroxyl group; requires a central core of homology in the junction. The consensus cleavage sequence is 5'-(A/T)TT(C/G)-3'. Cleavage occurs on the 3'-side of the TT dinucleotide at the point of strand exchange. HJ branch migration catalyzed by RuvA-RuvB allows RuvC to scan DNA until it finds its consensus sequence, where it cleaves and resolves the cruciform DNA. The protein is Crossover junction endodeoxyribonuclease RuvC of Thermosynechococcus vestitus (strain NIES-2133 / IAM M-273 / BP-1).